The chain runs to 238 residues: Ribosomal RNA small subunit methyltransferase G (238 aa).

S-adenosyl-L-methionine is bound by residues Gly106, Leu111, 157–158 (IE), and Arg170.

It belongs to the methyltransferase superfamily. RNA methyltransferase RsmG family.

Its subcellular location is the cytoplasm. It carries out the reaction guanosine(527) in 16S rRNA + S-adenosyl-L-methionine = N(7)-methylguanosine(527) in 16S rRNA + S-adenosyl-L-homocysteine. Functionally, specifically methylates the N7 position of guanine in position 527 of 16S rRNA. The sequence is that of Ribosomal RNA small subunit methyltransferase G from Psychrobacter cryohalolentis (strain ATCC BAA-1226 / DSM 17306 / VKM B-2378 / K5).